Reading from the N-terminus, the 208-residue chain is Guanylate kinase (208 aa).

Residues 4–185 (GNLYILSAPS…ALADLVHILR (182 aa)) enclose the Guanylate kinase-like domain. 11-18 (APSGAGKS) contributes to the ATP binding site.

This sequence belongs to the guanylate kinase family.

It is found in the cytoplasm. The catalysed reaction is GMP + ATP = GDP + ADP. In terms of biological role, essential for recycling GMP and indirectly, cGMP. This chain is Guanylate kinase, found in Mannheimia succiniciproducens (strain KCTC 0769BP / MBEL55E).